Consider the following 228-residue polypeptide: Response regulator MprA (228 aa).

The region spanning 2–116 (RILAVDDDRA…ELLARIRALL (115 aa)) is the Response regulatory domain. At aspartate 46 the chain carries 4-aspartylphosphate. A DNA-binding region (ompR/PhoB-type) is located at residues 127-225 (SVAMSFSDLT…VRGVGYVLRE (99 aa)).

Phosphorylated and dephosphorylated by MprB.

Its subcellular location is the cytoplasm. Functionally, member of the two-component regulatory system MprB/MprA which contributes to maintaining a balance among several systems involved in stress resistance and is required for establishment and maintenance of persistent infection in the host. Functions as a transcriptional regulator that recognizes a 19-bp nucleotide motif comprizing two loosely conserved 8-bp direct DNA-binding motif repeats separated by a 3-bp spacer region. The protein is Response regulator MprA (mprA) of Mycobacterium leprae (strain TN).